Reading from the N-terminus, the 909-residue chain is Golgin subfamily A member 6-like protein 2 (909 aa).

The segment covering 1–11 (MWPQPHLPPHP) has biased composition (pro residues). 5 disordered regions span residues 1–88 (MWPQ…ASHQ), 300–362 (ERLR…EQEE), 381–408 (QEKQ…RLRE), 425–494 (KMRE…QRLP), and 524–909 (EEMW…QSSL). The span at 13–31 (MSEKTRQNKLAEAKKKFTD) shows a compositional bias: basic and acidic residues. A compositionally biased stretch (polar residues) spans 53-77 (NNGTNPETTTSEGCHSPEDTQQNRA). Over residues 78–88 (QLKEEKKASHQ) the composition is skewed to basic and acidic residues. A coiled-coil region spans residues 192–526 (HKKADRYIEE…EEKIRDQEEM (335 aa)). Composition is skewed to basic and acidic residues over residues 425 to 478 (KMRE…KQEE) and 524 to 542 (EEMW…MREQ). The span at 607–620 (AGGEEDAGAGEEDM) shows a compositional bias: acidic residues. Composition is skewed to gly residues over residues 641-654 (GGGG…GEDA) and 676-689 (GAGG…GEDV). Positions 692-719 (GRRRCGSSRGCRNRRRSCGNTRRCRSRR) are enriched in basic residues. The segment covering 746–755 (AGAEDVAAGG) has biased composition (low complexity). Positions 757 to 766 (DAGEEEDAGG) are enriched in acidic residues. Residues 791-871 (GAGGEDVGAG…AGGEDVGAGG (81 aa)) are compositionally biased toward gly residues. Positions 872-892 (DAREGGEDTRSEREDAGEAAR) are enriched in basic and acidic residues.

Belongs to the GOLGA6 family.

This is Golgin subfamily A member 6-like protein 2 (GOLGA6L2) from Homo sapiens (Human).